Consider the following 501-residue polypeptide: Armadillo repeat-containing protein 6 (501 aa).

A Phosphoserine modification is found at Ser64. ARM repeat units lie at residues Gly220–Asn264, Lys274–Gly318, Leu319–Gly369, and Thr370–Gly412. His263 bears the Pros-methylhistidine mark.

This sequence belongs to the ARMC6 family. Post-translationally, methylated at His-263 by METTL9.

The sequence is that of Armadillo repeat-containing protein 6 (ARMC6) from Homo sapiens (Human).